Here is a 232-residue protein sequence, read N- to C-terminus: Lipoprotein-releasing system ATP-binding protein LolD 2 (232 aa).

In terms of domain architecture, ABC transporter spans 11–231; that stretch reads VYLHDIKRQY…SLQDGVVVEL (221 aa). Residue 47 to 54 coordinates ATP; it reads APSGSGKS.

This sequence belongs to the ABC transporter superfamily. Lipoprotein translocase (TC 3.A.1.125) family. The complex is composed of two ATP-binding proteins (LolD) and two transmembrane proteins (LolC and LolE).

It is found in the cell inner membrane. In terms of biological role, part of the ABC transporter complex LolCDE involved in the translocation of mature outer membrane-directed lipoproteins, from the inner membrane to the periplasmic chaperone, LolA. Responsible for the formation of the LolA-lipoprotein complex in an ATP-dependent manner. The polypeptide is Lipoprotein-releasing system ATP-binding protein LolD 2 (Rhodopseudomonas palustris (strain ATCC BAA-98 / CGA009)).